Reading from the N-terminus, the 430-residue chain is MIDPNLLRNNLAEVAATLKLKRNFILDTKELAELEEQRKALQVETETLQAKRNARSKAVGAAKARGENIAPLLAEMDDMGHELATVKAELDEILAELNTIALTIPNLPADEVPLGKDDSENKEISRWGTPRQFDFEIKDHVTLGENLAGGIDFAAGAKLSGARFAVMKGQVAKMHRALAQFMLDLHTEQHGYTETYVPYLVNHTTLYGTGQLPKFGEDLFHTTPLEGEVPYALIPTAEVPVTNLVRDEILNTEDLPIRMTAHTPCFRSEAGSYGRDTRGLIRMHQFDKVEMVQIVDPDKSMEALEELTAHAEKVLQLLGLPYRKMLLCTGDMGFGSCKTYDLEVWVPAQDTYREISSCSNMWDFQARRMQARCRSKTDKKTRLVHTLNGSGLAVGRTLVAVLENYQNEDGSVTVPEVLRPYMGGLEVIGK.

Position 236–238 (236–238) interacts with L-serine; sequence TAE. Residue 267–269 participates in ATP binding; it reads RSE. Glutamate 290 serves as a coordination point for L-serine. 354 to 357 contacts ATP; that stretch reads EISS. Serine 390 is an L-serine binding site.

The protein belongs to the class-II aminoacyl-tRNA synthetase family. Type-1 seryl-tRNA synthetase subfamily. As to quaternary structure, homodimer. The tRNA molecule binds across the dimer.

Its subcellular location is the cytoplasm. It catalyses the reaction tRNA(Ser) + L-serine + ATP = L-seryl-tRNA(Ser) + AMP + diphosphate + H(+). The catalysed reaction is tRNA(Sec) + L-serine + ATP = L-seryl-tRNA(Sec) + AMP + diphosphate + H(+). It participates in aminoacyl-tRNA biosynthesis; selenocysteinyl-tRNA(Sec) biosynthesis; L-seryl-tRNA(Sec) from L-serine and tRNA(Sec): step 1/1. Catalyzes the attachment of serine to tRNA(Ser). Is also able to aminoacylate tRNA(Sec) with serine, to form the misacylated tRNA L-seryl-tRNA(Sec), which will be further converted into selenocysteinyl-tRNA(Sec). This Mannheimia succiniciproducens (strain KCTC 0769BP / MBEL55E) protein is Serine--tRNA ligase.